The sequence spans 472 residues: tRNA-2-methylthio-N(6)-dimethylallyladenosine synthase (472 aa).

An MTTase N-terminal domain is found at 22–142; the sequence is RKVFVKTYGC…LPDALKRARA (121 aa). [4Fe-4S] cluster-binding residues include C31, C67, C105, C183, C187, and C190. Residues 169–403 form the Radical SAM core domain; the sequence is RARGVTAFLT…LLVKQQRGFA (235 aa). The TRAM domain occupies 404–466; sequence EACVGREIDL…PNSLFAEMIG (63 aa).

Belongs to the methylthiotransferase family. MiaB subfamily. As to quaternary structure, monomer. [4Fe-4S] cluster is required as a cofactor.

It localises to the cytoplasm. It catalyses the reaction N(6)-dimethylallyladenosine(37) in tRNA + (sulfur carrier)-SH + AH2 + 2 S-adenosyl-L-methionine = 2-methylsulfanyl-N(6)-dimethylallyladenosine(37) in tRNA + (sulfur carrier)-H + 5'-deoxyadenosine + L-methionine + A + S-adenosyl-L-homocysteine + 2 H(+). Functionally, catalyzes the methylthiolation of N6-(dimethylallyl)adenosine (i(6)A), leading to the formation of 2-methylthio-N6-(dimethylallyl)adenosine (ms(2)i(6)A) at position 37 in tRNAs that read codons beginning with uridine. The protein is tRNA-2-methylthio-N(6)-dimethylallyladenosine synthase of Rhizobium meliloti (strain 1021) (Ensifer meliloti).